Here is a 395-residue protein sequence, read N- to C-terminus: Protein SGT1 (395 aa).

A Glycyl lysine isopeptide (Lys-Gly) (interchain with G-Cter in ubiquitin) cross-link involves residue lysine 32. The segment at lysine 137–isoleucine 175 is disordered. A phosphoserine mark is found at serine 168 and serine 171. Residues serine 182–glutamate 277 enclose the CS domain. The SGS domain occupies serine 312–tryptophan 395. Residues aspartate 373–tryptophan 395 are disordered.

The protein belongs to the SGT1 family. Interacts with SKP1/CBF3D. Part of SCF E3 ubiquitin ligase complexes containing SKP1, CDC53, HRT1 and some F-box proteins. Interacts with CIR1/CDC35.

In terms of biological role, involved in ubiquitination and subsequent proteasomal degradation of target proteins. Required for both entry into S phase and kinetochore function. Also involved in cyclic AMP (cAMP) pathway, possibly by participating in the assembly or the conformational activation of specific multiprotein complexes. This chain is Protein SGT1, found in Saccharomyces cerevisiae (strain ATCC 204508 / S288c) (Baker's yeast).